Reading from the N-terminus, the 256-residue chain is uncharacterized protein (256 aa).

4 helical membrane passes run phenylalanine 5–leucine 25, isoleucine 30–phenylalanine 50, valine 64–isoleucine 84, and valine 105–isoleucine 125. The disordered stretch occupies residues glutamate 198–serine 256. Over residues leucine 203–lysine 215 the composition is skewed to low complexity. 2 positions are modified to phosphoserine: serine 210 and serine 211.

Its subcellular location is the endoplasmic reticulum membrane. It localises to the nucleus membrane. This is an uncharacterized protein from Schizosaccharomyces pombe (strain 972 / ATCC 24843) (Fission yeast).